Here is a 118-residue protein sequence, read N- to C-terminus: Large ribosomal subunit protein bL20 (118 aa).

This sequence belongs to the bacterial ribosomal protein bL20 family.

Functionally, binds directly to 23S ribosomal RNA and is necessary for the in vitro assembly process of the 50S ribosomal subunit. It is not involved in the protein synthesizing functions of that subunit. This is Large ribosomal subunit protein bL20 from Cyanothece sp. (strain PCC 7425 / ATCC 29141).